Here is a 367-residue protein sequence, read N- to C-terminus: MEKPIFVTQPNLPPLEEFIPYLEIIWQNKQFTNNGPMHQKLEKKLCEFLGVEYISLFNNGTIALITAVQALGVKGEVITTPYSFVATAHSLVLNGLKPVFVDIDPKTLNIDPRRIEEAITPETQAIMPVHCYGNPCDTQAIADIAQKYNLKVIYDAAHAFGVEDDDGSVLRHGDLSVLSFHATKVFSTFEGGAIVCNSKEMKEKIDRLKNFGYIDETNINIIGSNGKMSEVNAAFGLLQLEHMDTFLRGRMNADMFYRQKLKDITGISIVIPSGQKISNFSYFPILVESDFPLSRDELFNYLKNQNIFARRYFYPVIPDFQAYLNVGEVCDVKNAREIASKVLCLPMHAELSSDILEYIVSTIREIK.

Lysine 184 is subject to N6-(pyridoxal phosphate)lysine.

It belongs to the DegT/DnrJ/EryC1 family. It depends on pyridoxal 5'-phosphate as a cofactor.

The catalysed reaction is dTDP-4-amino-4,6-dideoxy-D-glucose + 2-oxoglutarate = dTDP-4-dehydro-6-deoxy-alpha-D-glucose + L-glutamate. The protein operates within bacterial outer membrane biogenesis; lipopolysaccharide biosynthesis. Its function is as follows. Catalyzes the conversion of dTDP-4-dehydro-6-deoxy-D-glucose (dTDP-D-Glc4O) to dTDP-4-amino-4,6-dideoxy-D-glucose (dTDP-D-Qui4N). L-glutamine can also be used as amino donor. In Shigella dysenteriae, this protein is dTDP-4-amino-4,6-dideoxy-D-glucose transaminase (vioA).